The primary structure comprises 95 residues: MTKSELIERIVTHQGQLSSKDVELAIKTMLEQMSQALATGDRIEIRGFGSFSLHYRAPRVGRNPKTGQSVRLDGKFVPHFKPGKELRDRVNEDES.

The interval 59 to 95 is disordered; that stretch reads RVGRNPKTGQSVRLDGKFVPHFKPGKELRDRVNEDES. Basic and acidic residues predominate over residues 72-95; it reads LDGKFVPHFKPGKELRDRVNEDES.

The protein belongs to the bacterial histone-like protein family. Heterodimer of an alpha and a beta chain.

In terms of biological role, this protein is one of the two subunits of integration host factor, a specific DNA-binding protein that functions in genetic recombination as well as in transcriptional and translational control. In Ectopseudomonas mendocina (strain ymp) (Pseudomonas mendocina), this protein is Integration host factor subunit beta.